The following is a 354-amino-acid chain: Anthranilate phosphoribosyltransferase (354 aa).

Residues G94, 97–98, T102, 104–107, 122–130, and S134 each bind 5-phospho-alpha-D-ribose 1-diphosphate; these read GD, NIST, and KHGNRAASS. G94 serves as a coordination point for anthranilate. Residue S106 coordinates Mg(2+). Anthranilate is bound at residue N125. R180 contacts anthranilate. Mg(2+) contacts are provided by D238 and E239.

This sequence belongs to the anthranilate phosphoribosyltransferase family. As to quaternary structure, homodimer. Requires Mg(2+) as cofactor.

It catalyses the reaction N-(5-phospho-beta-D-ribosyl)anthranilate + diphosphate = 5-phospho-alpha-D-ribose 1-diphosphate + anthranilate. It functions in the pathway amino-acid biosynthesis; L-tryptophan biosynthesis; L-tryptophan from chorismate: step 2/5. In terms of biological role, catalyzes the transfer of the phosphoribosyl group of 5-phosphorylribose-1-pyrophosphate (PRPP) to anthranilate to yield N-(5'-phosphoribosyl)-anthranilate (PRA). This is Anthranilate phosphoribosyltransferase from Streptomyces avermitilis (strain ATCC 31267 / DSM 46492 / JCM 5070 / NBRC 14893 / NCIMB 12804 / NRRL 8165 / MA-4680).